The sequence spans 160 residues: Cyclic pyranopterin monophosphate synthase (160 aa).

Substrate contacts are provided by residues 77-79 (MCH) and 114-115 (ME). The active site involves aspartate 129.

It belongs to the MoaC family. In terms of assembly, homohexamer; trimer of dimers.

The enzyme catalyses (8S)-3',8-cyclo-7,8-dihydroguanosine 5'-triphosphate = cyclic pyranopterin phosphate + diphosphate. Its pathway is cofactor biosynthesis; molybdopterin biosynthesis. Catalyzes the conversion of (8S)-3',8-cyclo-7,8-dihydroguanosine 5'-triphosphate to cyclic pyranopterin monophosphate (cPMP). The sequence is that of Cyclic pyranopterin monophosphate synthase from Listeria monocytogenes serotype 4b (strain F2365).